The following is a 192-amino-acid chain: uncharacterized protein (192 aa).

The region spanning 29-160 (RRQAAVLIPV…PLDIYRRGDS (132 aa)) is the Nudix hydrolase domain. Residues 67–89 (GAVDSSDASLIAAALREAQEEVA) carry the Nudix box motif. Mg(2+)-binding residues include glutamate 83 and glutamate 87.

The protein belongs to the Nudix hydrolase family. PCD1 subfamily. Requires Mn(2+) as cofactor. Mg(2+) is required as a cofactor.

Functionally, probably mediates the hydrolysis of some nucleoside diphosphate derivatives. This is an uncharacterized protein from Citrobacter koseri (strain ATCC BAA-895 / CDC 4225-83 / SGSC4696).